Reading from the N-terminus, the 289-residue chain is ATP synthase gamma chain (289 aa).

It belongs to the ATPase gamma chain family. In terms of assembly, F-type ATPases have 2 components, CF(1) - the catalytic core - and CF(0) - the membrane proton channel. CF(1) has five subunits: alpha(3), beta(3), gamma(1), delta(1), epsilon(1). CF(0) has three main subunits: a, b and c.

Its subcellular location is the cell inner membrane. Functionally, produces ATP from ADP in the presence of a proton gradient across the membrane. The gamma chain is believed to be important in regulating ATPase activity and the flow of protons through the CF(0) complex. The sequence is that of ATP synthase gamma chain from Coxiella burnetii (strain Dugway 5J108-111).